Consider the following 543-residue polypeptide: CTP synthase (543 aa).

Positions 1-267 (MKQTKYIFVT…LSPIAEILDL (267 aa)) are amidoligase domain. A CTP-binding site is contributed by S15. S15 is a UTP binding site. ATP contacts are provided by residues 16-21 (SLGKGI) and D73. The Mg(2+) site is built by D73 and E141. Residues 148-150 (DIE), 188-193 (KTKPTQ), and K224 contribute to the CTP site. Residues 188 to 193 (KTKPTQ) and K224 contribute to the UTP site. In terms of domain architecture, Glutamine amidotransferase type-1 spans 292-543 (KIAFVGKYVD…IKAAINYEDN (252 aa)). G354 lines the L-glutamine pocket. C381 acts as the Nucleophile; for glutamine hydrolysis in catalysis. Residues 382 to 385 (LGMQ), E405, and R473 each bind L-glutamine. Residues H516 and E518 contribute to the active site.

It belongs to the CTP synthase family. Homotetramer.

The enzyme catalyses UTP + L-glutamine + ATP + H2O = CTP + L-glutamate + ADP + phosphate + 2 H(+). It carries out the reaction L-glutamine + H2O = L-glutamate + NH4(+). It catalyses the reaction UTP + NH4(+) + ATP = CTP + ADP + phosphate + 2 H(+). It functions in the pathway pyrimidine metabolism; CTP biosynthesis via de novo pathway; CTP from UDP: step 2/2. Its activity is regulated as follows. Allosterically activated by GTP, when glutamine is the substrate; GTP has no effect on the reaction when ammonia is the substrate. The allosteric effector GTP functions by stabilizing the protein conformation that binds the tetrahedral intermediate(s) formed during glutamine hydrolysis. Inhibited by the product CTP, via allosteric rather than competitive inhibition. Its function is as follows. Catalyzes the ATP-dependent amination of UTP to CTP with either L-glutamine or ammonia as the source of nitrogen. Regulates intracellular CTP levels through interactions with the four ribonucleotide triphosphates. The protein is CTP synthase of Campylobacter jejuni subsp. jejuni serotype O:2 (strain ATCC 700819 / NCTC 11168).